A 448-amino-acid polypeptide reads, in one-letter code: Phosphoglucosamine mutase (448 aa).

The Phosphoserine intermediate role is filled by Ser104. Mg(2+)-binding residues include Ser104, Asp245, Asp247, and Asp249. Ser104 carries the phosphoserine modification.

It belongs to the phosphohexose mutase family. Mg(2+) is required as a cofactor. Activated by phosphorylation.

The catalysed reaction is alpha-D-glucosamine 1-phosphate = D-glucosamine 6-phosphate. In terms of biological role, catalyzes the conversion of glucosamine-6-phosphate to glucosamine-1-phosphate. This is Phosphoglucosamine mutase from Caulobacter vibrioides (strain ATCC 19089 / CIP 103742 / CB 15) (Caulobacter crescentus).